The sequence spans 466 residues: Acetylornithine aminotransferase, mitochondrial (466 aa).

An N6-(pyridoxal phosphate)lysine modification is found at Lys308.

Belongs to the class-III pyridoxal-phosphate-dependent aminotransferase family. Pyridoxal 5'-phosphate is required as a cofactor.

It is found in the mitochondrion matrix. It catalyses the reaction N(2)-acetyl-L-ornithine + 2-oxoglutarate = N-acetyl-L-glutamate 5-semialdehyde + L-glutamate. It participates in amino-acid biosynthesis; L-arginine biosynthesis; N(2)-acetyl-L-ornithine from L-glutamate: step 4/4. The sequence is that of Acetylornithine aminotransferase, mitochondrial (ARG8) from Debaryomyces hansenii (strain ATCC 36239 / CBS 767 / BCRC 21394 / JCM 1990 / NBRC 0083 / IGC 2968) (Yeast).